A 56-amino-acid chain; its full sequence is Cruciferin (56 aa).

Thr45 is modified (phosphothreonine).

This sequence belongs to the 11S seed storage protein (globulins) family. As to quaternary structure, hexamer; each subunit is composed of an acidic and a basic chain derived from a single precursor and linked by a disulfide bond.

This is a seed storage protein. The polypeptide is Cruciferin (Sinapis alba (White mustard)).